A 767-amino-acid polypeptide reads, in one-letter code: Cap-specific mRNA (nucleoside-2'-O-)-methyltransferase 2 (767 aa).

Residues 109-322 (ELCTQAWCKF…VYVVCLRYKG (214 aa)) form the Adrift-type SAM-dependent 2'-O-MTase domain. Residue Lys-117 is part of the active site. Gly-148, Trp-167, and Asp-235 together coordinate S-adenosyl-L-methionine. Residue Asp-235 is part of the active site. The active-site Proton acceptor is the Lys-275.

The protein resides in the nucleus. It localises to the cytoplasm. The enzyme catalyses a 5'-end (N(7)-methyl 5'-triphosphoguanosine)-(2'-O-methyl-ribonucleoside)-(ribonucleotide) in mRNA + S-adenosyl-L-methionine = a 5'-end (N(7)-methyl 5'-triphosphoguanosine)-(2'-O-methyl-ribonucleoside)-(2'-O-methyl-ribonucleotide) in mRNA + S-adenosyl-L-homocysteine + H(+). Its function is as follows. S-adenosyl-L-methionine-dependent methyltransferase that mediates mRNA cap2 2'-O-ribose methylation to the 5'-cap structure of mRNAs. Methylates the ribose of the second nucleotide of a m(7)GpppG-capped mRNA and small nuclear RNA (snRNA) (cap0) to produce m(7)GpppRmpNm (cap2). Recognizes a guanosine cap on RNA independently of its N(7) methylation status. Display cap2 methylation on both cap0 and cap1. Displays a preference for cap1 RNAs. This chain is Cap-specific mRNA (nucleoside-2'-O-)-methyltransferase 2 (Cmtr2), found in Mus musculus (Mouse).